The following is a 102-amino-acid chain: Small ribosomal subunit protein uS10 (102 aa).

Belongs to the universal ribosomal protein uS10 family. Part of the 30S ribosomal subunit.

In terms of biological role, involved in the binding of tRNA to the ribosomes. The sequence is that of Small ribosomal subunit protein uS10 from Bifidobacterium animalis subsp. lactis (strain AD011).